The chain runs to 75 residues: Small ribosomal subunit protein bS18 (75 aa).

Belongs to the bacterial ribosomal protein bS18 family. As to quaternary structure, part of the 30S ribosomal subunit. Forms a tight heterodimer with protein bS6.

Binds as a heterodimer with protein bS6 to the central domain of the 16S rRNA, where it helps stabilize the platform of the 30S subunit. The chain is Small ribosomal subunit protein bS18 from Chromobacterium violaceum (strain ATCC 12472 / DSM 30191 / JCM 1249 / CCUG 213 / NBRC 12614 / NCIMB 9131 / NCTC 9757 / MK).